A 1544-amino-acid chain; its full sequence is Protein mahjong (1544 aa).

The disordered stretch occupies residues 1–110 (MSEGSGSENA…AAADRRQATK (110 aa)). A compositionally biased stretch (low complexity) spans 10–35 (AAAAEAAAEAEAATEAALMAEAVAVA). Residues 38 to 91 (SDEEEQPEAEDMPEQAGDNQEEDAAEQQDGGEPEADEDADADDAMSVENAENES) show a composition bias toward acidic residues. Residues serine 565 and serine 569 each carry the phosphoserine modification. The LisH domain occupies 912–944 (NKQQLYQLIFEHLESNGLSQTAQMLQREVGLPL). Disordered stretches follow at residues 946–973 (TPTTRSFHQSPFDYKSLPSGSSSLSRNR) and 987–1059 (GNGD…LAED). Position 955 is a phosphoserine (serine 955). Positions 961–971 (SLPSGSSSLSR) are enriched in low complexity. Residues 1016–1027 (PNFSSLNTTQTP) are compositionally biased toward polar residues. 2 consecutive short sequence motifs (DWD box) follow at residues 1302-1309 (VLWDVRSG) and 1338-1345 (EVWDLRTF). Disordered stretches follow at residues 1447–1475 (KSERSEEEDDEEVPESDEDGSDTGSENTF) and 1487–1544 (LRNL…SSDD). Acidic residues-rich tracts occupy residues 1451 to 1467 (SEEEDDEEVPESDEDGS) and 1495 to 1535 (NDDE…DVLE).

It belongs to the VPRBP/DCAF1 family. In terms of assembly, component of the CUL4-RBX1-DDB1-DCAF1 E3 ubiquitin-protein ligase complex. Interacts with l(2)gl.

It localises to the nucleus. It functions in the pathway protein modification; protein ubiquitination. In terms of biological role, probable substrate recognition component of tsome E3 ubiquitin-protein ligase complex. Plays a key role in cell competition via its interaction with l(2)gl. The polypeptide is Protein mahjong (mahj) (Drosophila melanogaster (Fruit fly)).